The primary structure comprises 91 residues: Small ribosomal subunit protein bS16 (91 aa).

The protein belongs to the bacterial ribosomal protein bS16 family.

The sequence is that of Small ribosomal subunit protein bS16 from Staphylococcus aureus (strain Mu3 / ATCC 700698).